Here is a 377-residue protein sequence, read N- to C-terminus: Nitric oxide reductase FlRd-NAD(+) reductase (377 aa).

This sequence belongs to the FAD-dependent oxidoreductase family. Requires FAD as cofactor.

It localises to the cytoplasm. The catalysed reaction is 2 reduced [nitric oxide reductase rubredoxin domain] + NAD(+) + H(+) = 2 oxidized [nitric oxide reductase rubredoxin domain] + NADH. It functions in the pathway nitrogen metabolism; nitric oxide reduction. In terms of biological role, one of at least two accessory proteins for anaerobic nitric oxide (NO) reductase. Reduces the rubredoxin moiety of NO reductase. This Enterobacter sp. (strain 638) protein is Nitric oxide reductase FlRd-NAD(+) reductase.